Here is a 447-residue protein sequence, read N- to C-terminus: Tubulin beta-2 chain (447 aa).

GTP contacts are provided by glutamine 11, glutamate 69, serine 138, glycine 142, threonine 143, glycine 144, asparagine 204, and asparagine 226. Glutamate 69 lines the Mg(2+) pocket. The segment at 426-447 is disordered; the sequence is QDAGVDEEEEEYEDDAPLEEEV. Acidic residues predominate over residues 429–447; it reads GVDEEEEEYEDDAPLEEEV.

The protein belongs to the tubulin family. In terms of assembly, dimer of alpha and beta chains. A typical microtubule is a hollow water-filled tube with an outer diameter of 25 nm and an inner diameter of 15 nM. Alpha-beta heterodimers associate head-to-tail to form protofilaments running lengthwise along the microtubule wall with the beta-tubulin subunit facing the microtubule plus end conferring a structural polarity. Microtubules usually have 13 protofilaments but different protofilament numbers can be found in some organisms and specialized cells. The cofactor is Mg(2+).

It is found in the cytoplasm. The protein localises to the cytoskeleton. Functionally, tubulin is the major constituent of microtubules, a cylinder consisting of laterally associated linear protofilaments composed of alpha- and beta-tubulin heterodimers. Microtubules grow by the addition of GTP-tubulin dimers to the microtubule end, where a stabilizing cap forms. Below the cap, tubulin dimers are in GDP-bound state, owing to GTPase activity of alpha-tubulin. The chain is Tubulin beta-2 chain (TUB2) from Colletotrichum graminicola (Maize anthracnose fungus).